Reading from the N-terminus, the 324-residue chain is Putative ribose-phosphate pyrophosphokinase 2 (324 aa).

Residues 43–45 (DGE) and 102–103 (RQ) contribute to the ATP site. Position 136 (His-136) interacts with Mg(2+). Residues Asp-225 and 229–233 (NTGKT) contribute to the D-ribose 5-phosphate site.

This sequence belongs to the ribose-phosphate pyrophosphokinase family. Class I subfamily. As to quaternary structure, homohexamer. Mg(2+) is required as a cofactor.

The protein localises to the cytoplasm. It catalyses the reaction D-ribose 5-phosphate + ATP = 5-phospho-alpha-D-ribose 1-diphosphate + AMP + H(+). It functions in the pathway metabolic intermediate biosynthesis; 5-phospho-alpha-D-ribose 1-diphosphate biosynthesis; 5-phospho-alpha-D-ribose 1-diphosphate from D-ribose 5-phosphate (route I): step 1/1. Involved in the biosynthesis of the central metabolite phospho-alpha-D-ribosyl-1-pyrophosphate (PRPP) via the transfer of pyrophosphoryl group from ATP to 1-hydroxyl of ribose-5-phosphate (Rib-5-P). This Streptococcus agalactiae serotype III (strain NEM316) protein is Putative ribose-phosphate pyrophosphokinase 2.